The primary structure comprises 166 residues: Early E3 18.5 kDa glycoprotein (166 aa).

Positions 1–19 are cleaved as a signal peptide; it reads MGPILVLLVLLSLLEPGSA. Residues 20–131 are Lumenal-facing; that stretch reads NYDPCLDFDP…SKDNIVTFSI (112 aa). An N-linked (GlcNAc...) asparagine; by host glycan is attached at asparagine 31. 2 cysteine pairs are disulfide-bonded: cysteine 32/cysteine 50 and cysteine 44/cysteine 106. Residues asparagine 63, asparagine 67, and asparagine 97 are each glycosylated (N-linked (GlcNAc...) asparagine; by host). The chain crosses the membrane as a helical span at residues 132 to 152; that stretch reads AYCLCACLLTALLCVCIHLLV. Residues 153 to 166 are Cytoplasmic-facing; it reads TTRIKNANNKEKMP. The Di-lysine motif signature appears at 162 to 166; the sequence is KEKMP.

The protein belongs to the adenoviridae E19 family. Post-translationally, both disulfide bonds are absolutely critical for the interaction with MHC antigens. N-glycosylated; high-mannose.

It localises to the host endoplasmic reticulum membrane. Binds and retains class I heavy chains in the endoplasmic reticulum during the early period of virus infection, thereby impairing their transport to the cell surface. Also delays the expression of class I alleles that it cannot affect by direct retention. Binds transporters associated with antigen processing (TAP) and acts as a tapasin inhibitor, preventing class I/TAP association. In consequence, infected cells are masked for immune recognition by cytotoxic T-lymphocytes. In Human adenovirus B serotype 11 (strain Slobiski) (HAdV-11), this protein is Early E3 18.5 kDa glycoprotein.